The primary structure comprises 485 residues: MRVLHVCSELYPILKTGGLADVTAALPPALASFGVDSRVLVPGFPAFMNAIKDKQLLINIPSRFGAEEINIFLAKIPNTKIDIYVVDAPSLFARPGNPYADSSNQAYADNYLRFALLGWVAARISEGLDAKWKPEVVHSHDWHAGLVPAYIKASELASGKKAVKTVFTVHNLAYQGLFPMSVFAELDLPGIFLSMNGLEFYGQVSFMKAGLYFADKITTVSPTYAKEIQSYEQGCGLEGLLADRHNDLYGVLNGVDPQVWNPKKDTLIEANYSVTTANVGKAKCKTALQAMTGLAKKEDAVVFGIVTRLTEQKGLNLLIEAIGEITSRGGQVVLLGSGDKALEEAFLAAAKKSPKSIAVQIGYDEEQAHRIIAGSDVILVPSRFEPCGLTQLYGLTYGTLPLVHKVGGLADTVTDSSLENLADGTATGFVFDEFSVESLTLAIRRAFALYNRKADWKKVRKTAMQQKVDWNAAADKIHQIYSQLV.

K15 contributes to the ADP-alpha-D-glucose binding site.

The protein belongs to the glycosyltransferase 1 family. Bacterial/plant glycogen synthase subfamily.

The enzyme catalyses [(1-&gt;4)-alpha-D-glucosyl](n) + ADP-alpha-D-glucose = [(1-&gt;4)-alpha-D-glucosyl](n+1) + ADP + H(+). It participates in glycan biosynthesis; glycogen biosynthesis. Its function is as follows. Synthesizes alpha-1,4-glucan chains using ADP-glucose. This Francisella philomiragia subsp. philomiragia (strain ATCC 25017 / CCUG 19701 / FSC 153 / O#319-036) protein is Glycogen synthase.